We begin with the raw amino-acid sequence, 1037 residues long: Sentrin-specific protease 7 (1037 aa).

Basic residues predominate over residues 1–10; sequence MDRARPGRRR. Disordered regions lie at residues 1 to 27 and 185 to 399; these read MDRA…SSPA and SDTA…ENSS. 3 positions are modified to phosphoserine: S12, S13, and S25. The span at 192–208 shows a compositional bias: low complexity; that stretch reads SEQLSSSSDGSLESCQS. Polar residues predominate over residues 272–282; sequence GTSNKNTSYSY. Basic residues predominate over residues 290 to 300; sequence VSRKRKKRGRS. 2 stretches are compositionally biased toward basic and acidic residues: residues 301-321 and 328-341; these read NFHD…HTKE and VSRK…DSHQ. A compositionally biased stretch (low complexity) spans 379–399; that stretch reads ASSPNKSLESSASSEVSENSS. A phosphoserine mark is found at S434 and S435. Residues 747 to 1037 are protease; sequence LGVTNEDLEC…HLQQQKGGSC (291 aa). H847 is an active-site residue. The tract at residues 873 to 909 is disordered; sequence QFQGQQSQHDHKMTDNDPHTTSTVSTSAEDSQSTEVN. Positions 880 to 890 are enriched in basic and acidic residues; that stretch reads QHDHKMTDNDP. The span at 891–909 shows a compositional bias: polar residues; that stretch reads HTTSTVSTSAEDSQSTEVN. D926 is a catalytic residue. C979 acts as the Nucleophile in catalysis.

Belongs to the peptidase C48 family.

Its subcellular location is the cytoplasm. Its function is as follows. Protease that acts as a positive regulator of the cGAS-STING pathway by catalyzing desumoylation of CGAS. Desumoylation of CGAS promotes DNA-binding activity of CGAS, subsequent oligomerization and activation. Deconjugates SUMO2 and SUMO3 from targeted proteins, but not SUMO1. Catalyzes the deconjugation of poly-SUMO2 and poly-SUMO3 chains. Has very low efficiency in processing full-length SUMO proteins to their mature forms. This chain is Sentrin-specific protease 7, found in Mus musculus (Mouse).